Consider the following 318-residue polypeptide: Homeobox-leucine zipper protein ATHB-4 (318 aa).

Disordered stretches follow at residues 1-23 (MGER…KEPS) and 128-165 (ARGG…RKKL). Low complexity predominate over residues 8–17 (LGLSLSLGNS). A compositionally biased stretch (basic and acidic residues) spans 128–140 (ARGGDENEAERAS). The segment at residues 160 to 219 (GSRKKLRLSKDQALVLEETFKEHSTLNPKQKLALAKQLNLRARQVEVWFQNRRARTKLKQ) is a DNA-binding region (homeobox). Positions 227-248 (LKRCCDNLTEENRRLQKEVSEL) are leucine-zipper.

This sequence belongs to the HD-ZIP homeobox family. Class II subfamily.

It is found in the nucleus. Its function is as follows. Probable transcription factor. In Arabidopsis thaliana (Mouse-ear cress), this protein is Homeobox-leucine zipper protein ATHB-4 (ATHB-4).